The following is a 144-amino-acid chain: Large ribosomal subunit protein uL15 (144 aa).

Residues 1 to 59 (MHLNTLAPAPGAKKSSKRVGRGMGSGLGKTGGRGHKGQKSRSGGSVKPGFEGGQMPIQR) are disordered. The span at 21–31 (RGMGSGLGKTG) shows a compositional bias: gly residues.

It belongs to the universal ribosomal protein uL15 family. As to quaternary structure, part of the 50S ribosomal subunit.

Its function is as follows. Binds to the 23S rRNA. The polypeptide is Large ribosomal subunit protein uL15 (Pseudoalteromonas atlantica (strain T6c / ATCC BAA-1087)).